We begin with the raw amino-acid sequence, 169 residues long: Anaerobic nitrite reductase NSHB2 (169 aa).

The region spanning serine 16 to lysine 166 is the Globin domain. Positions glutamate 49–serine 53 match the Homodimerization motif. Residues serine 59, lysine 73, histidine 77, arginine 107, threonine 111, and histidine 112 each coordinate heme b. The Homodimerization signature appears at aspartate 119–glutamate 131.

It belongs to the plant globin family. As to quaternary structure, homodimer. Heme b is required as a cofactor. As to expression, expressed in leaves, but not in roots. Present in embryonic organs including embryos, coleoptiles and seminal roots.

The protein resides in the cytoplasm. It localises to the nucleus. It carries out the reaction Fe(III)-heme b-[protein] + nitric oxide + H2O = Fe(II)-heme b-[protein] + nitrite + 2 H(+). Its function is as follows. Phytoglobin that reduces nitrite to nitric oxide under anoxic conditions (e.g. during flooding or in waterlogged soil). May not function as an oxygen storage or transport protein. Has an unusually high affinity for O(2) through an hexacoordinate heme iron because of a very low dissociation constant. Promotes tolerance to low potassium K(+) conditions. This chain is Anaerobic nitrite reductase NSHB2, found in Oryza sativa subsp. japonica (Rice).